A 116-amino-acid chain; its full sequence is Ribosome-binding factor A (116 aa).

It belongs to the RbfA family. Monomer. Binds 30S ribosomal subunits, but not 50S ribosomal subunits or 70S ribosomes.

Its subcellular location is the cytoplasm. In terms of biological role, one of several proteins that assist in the late maturation steps of the functional core of the 30S ribosomal subunit. Associates with free 30S ribosomal subunits (but not with 30S subunits that are part of 70S ribosomes or polysomes). Required for efficient processing of 16S rRNA. May interact with the 5'-terminal helix region of 16S rRNA. This Mycoplasma pneumoniae (strain ATCC 29342 / M129 / Subtype 1) (Mycoplasmoides pneumoniae) protein is Ribosome-binding factor A.